We begin with the raw amino-acid sequence, 476 residues long: Glutamate--tRNA ligase 1 (476 aa).

Residues 9-19 carry the 'HIGH' region motif; that stretch reads PSPTGFLHIGG. A 'KMSKS' region motif is present at residues 238-242; sequence KLSKR. Lys-241 is an ATP binding site.

This sequence belongs to the class-I aminoacyl-tRNA synthetase family. Glutamate--tRNA ligase type 1 subfamily. In terms of assembly, monomer.

The protein localises to the cytoplasm. It catalyses the reaction tRNA(Glu) + L-glutamate + ATP = L-glutamyl-tRNA(Glu) + AMP + diphosphate. In terms of biological role, catalyzes the attachment of glutamate to tRNA(Glu) in a two-step reaction: glutamate is first activated by ATP to form Glu-AMP and then transferred to the acceptor end of tRNA(Glu). The protein is Glutamate--tRNA ligase 1 of Bartonella bacilliformis (strain ATCC 35685 / KC583 / Herrer 020/F12,63).